A 261-amino-acid chain; its full sequence is Calcium-binding protein 8 (261 aa).

The interval 1–41 (MRLPEQPGDGKPENETKGDQETPERGEEPRRSPAPDFPTWE) is disordered. Topologically, residues 1–234 (MRLPEQPGDG…QNRQTCVRKS (234 aa)) are cytoplasmic. Over residues 8–33 (GDGKPENETKGDQETPERGEEPRRSP) the composition is skewed to basic and acidic residues. 2 EF-hand domains span residues 78–113 (EELDEIREAFRVLDRDGNGFISKQELGMAMRSLGYM) and 114–149 (PSEVELAIIMQRLDMDGDGQVDFDEFMTILGPKLVS). Ca(2+) contacts are provided by D91, D93, N95, E102, D127, D129, D131, Q133, and E138. A helical; Anchor for type IV membrane protein transmembrane segment spans residues 235–255 (LICAFAMAFIISVMLIAANQI). The Extracellular segment spans residues 256 to 261 (LRSGME).

As to quaternary structure, interacts with PI4KB. This binding competes with FREQ/NCS1 binding in a calcium-dependent manner. Brain-specific. High expression in the cerebellum, hippocampus, and cortex.

The protein resides in the golgi apparatus. The protein localises to the trans-Golgi network membrane. It is found in the cytoplasm. Its subcellular location is the perinuclear region. It localises to the cell membrane. Its function is as follows. Negatively regulates Golgi-to-plasma membrane trafficking by interacting with PI4KB and inhibiting its activity. May play a role in the physiology of neurons and is potentially important in memory and learning. In Mus musculus (Mouse), this protein is Calcium-binding protein 8 (Caln1).